The following is a 1040-amino-acid chain: Multidrug resistance protein MdtB (1040 aa).

12 consecutive transmembrane segments (helical) span residues 16-36 (FIMR…AGII), 342-362 (DTQF…YLFL), 369-389 (IIPG…MVFL), 396-416 (LTLM…IVVI), 440-460 (IGFT…PLLF), 472-492 (FAVT…TLTP), 537-557 (WLTL…WVFI), 863-883 (LGST…VLGV), 888-908 (FIHP…ALLA), 911-931 (LAGS…IGIV), 968-988 (ILMT…STGV), and 998-1018 (IGMV…TPVI).

It belongs to the resistance-nodulation-cell division (RND) (TC 2.A.6) family. MdtB subfamily. Part of a tripartite efflux system composed of MdtA, MdtB and MdtC. MdtB forms a heteromultimer with MdtC.

The protein localises to the cell inner membrane. The chain is Multidrug resistance protein MdtB from Klebsiella pneumoniae subsp. pneumoniae (strain ATCC 700721 / MGH 78578).